Reading from the N-terminus, the 451-residue chain is NADH-quinone oxidoreductase subunit D (451 aa).

The protein belongs to the complex I 49 kDa subunit family. In terms of assembly, NDH-1 is composed of 14 different subunits. Subunits NuoB, C, D, E, F, and G constitute the peripheral sector of the complex.

The protein resides in the cell membrane. The enzyme catalyses a quinone + NADH + 5 H(+)(in) = a quinol + NAD(+) + 4 H(+)(out). NDH-1 shuttles electrons from NADH, via FMN and iron-sulfur (Fe-S) centers, to quinones in the respiratory chain. The immediate electron acceptor for the enzyme in this species is believed to be a menaquinone. Couples the redox reaction to proton translocation (for every two electrons transferred, four hydrogen ions are translocated across the cytoplasmic membrane), and thus conserves the redox energy in a proton gradient. The polypeptide is NADH-quinone oxidoreductase subunit D (Mycolicibacterium gilvum (strain PYR-GCK) (Mycobacterium gilvum (strain PYR-GCK))).